The primary structure comprises 419 residues: Napsin-A (419 aa).

The signal sequence occupies residues 1–16; sequence MSPLLLLLLCLLLGNL. The region spanning 73–394 is the Peptidase A1 domain; the sequence is YFGTIGLGTP…KNVGPRVGLA (322 aa). Asn-85 carries an N-linked (GlcNAc...) asparagine glycan. The active site involves Asp-91. A disulfide bridge connects residues Cys-104 and Cys-111. 2 N-linked (GlcNAc...) asparagine glycosylation sites follow: Asn-128 and Asn-149. A disulfide bridge links Cys-269 with Cys-273. Asp-278 is a catalytic residue. A disulfide bridge links Cys-312 with Cys-349. An N-linked (GlcNAc...) asparagine glycan is attached at Asn-331. The interval 391–419 is disordered; it reads VGLARAQSRSTDRAERRTTQAQFFKRRPG.

This sequence belongs to the peptidase A1 family. As to expression, expressed at the highest levels in the kidney, at a moderate level in the lung, and at low levels in the spleen and adipose tissue.

Its subcellular location is the secreted. May be involved in processing of pneumocyte surfactant precursors. The sequence is that of Napsin-A (Napsa) from Mus musculus (Mouse).